The primary structure comprises 228 residues: Ribose-5-phosphate isomerase A (228 aa).

Residues 27-30 (TGTT), 86-89 (DGAD), and 100-103 (KGGG) each bind substrate. Residue Glu-109 is the Proton acceptor of the active site. Lys-127 is a substrate binding site.

This sequence belongs to the ribose 5-phosphate isomerase family. In terms of assembly, homodimer.

It carries out the reaction aldehydo-D-ribose 5-phosphate = D-ribulose 5-phosphate. It participates in carbohydrate degradation; pentose phosphate pathway; D-ribose 5-phosphate from D-ribulose 5-phosphate (non-oxidative stage): step 1/1. In terms of biological role, catalyzes the reversible conversion of ribose-5-phosphate to ribulose 5-phosphate. The chain is Ribose-5-phosphate isomerase A from Borrelia hermsii (strain HS1 / DAH).